Consider the following 317-residue polypeptide: Beta-ketoacyl-[acyl-carrier-protein] synthase III (317 aa).

Catalysis depends on residues C112 and H244. Residues 245–249 are ACP-binding; it reads QANLR. Residue N274 is part of the active site.

This sequence belongs to the thiolase-like superfamily. FabH family. As to quaternary structure, homodimer.

The protein resides in the cytoplasm. It catalyses the reaction malonyl-[ACP] + acetyl-CoA + H(+) = 3-oxobutanoyl-[ACP] + CO2 + CoA. It participates in lipid metabolism; fatty acid biosynthesis. Functionally, catalyzes the condensation reaction of fatty acid synthesis by the addition to an acyl acceptor of two carbons from malonyl-ACP. Catalyzes the first condensation reaction which initiates fatty acid synthesis and may therefore play a role in governing the total rate of fatty acid production. Possesses both acetoacetyl-ACP synthase and acetyl transacylase activities. Its substrate specificity determines the biosynthesis of branched-chain and/or straight-chain of fatty acids. The sequence is that of Beta-ketoacyl-[acyl-carrier-protein] synthase III from Salmonella typhimurium (strain LT2 / SGSC1412 / ATCC 700720).